A 545-amino-acid chain; its full sequence is MATLQGQPVLILREGTQRTVGRDAQRMNIMAARVIAEAVRSTLGPKGMDKMLVDSLGDVVITNDGVTILKEIDVEHPAAKMIIEVAKTQDNEVGDGTTTAVVLAGELLKRAEELLDQEIHPAIIANGYRYAAEKALEILNEIAIPISKDDDEILKKIATTAMTGKGAEVAIDKLAEIAVNAVKMIAEESNGQVEVNTDYIKIEKRQGGSIEETELVDGIVLDKEVVHPGMPKRVENAKILLLDSALEVKETEIDAKIRITDPEKLQKFIEQEEAMLKEMVDKIVNAGANVVFCQKGIDDLAQYYLAKAGVLAVRRVKKSDMEKLAKATGAKVLTDLRDISSEDLGEAALVEERKVGDEKMVFVTGCKNPKAVTILVRGGTEHVVEEIARGIEDAVRAVACAVEDGKVVVGAGAPEIEVSLKLREWAPSLGGREQLAVEAFATALEIIPRTLAENAGLDPIDVLVELKAAHEKGQKYAGVDVDTGKVVDMKERGVFEPLRVKTQAIGSATEVAVMILRIDDIIAAKGLEKEKGGGGEGGMPEMPEF.

It belongs to the TCP-1 chaperonin family. Forms a Heterooligomeric complex of two stacked eight-membered rings.

Its function is as follows. Molecular chaperone; binds unfolded polypeptides in vitro, and has a weak ATPase activity. This is Thermosome subunit beta (thsB) from Archaeoglobus fulgidus (strain ATCC 49558 / DSM 4304 / JCM 9628 / NBRC 100126 / VC-16).